We begin with the raw amino-acid sequence, 846 residues long: MAP7 domain-containing protein 1 (846 aa).

Disordered stretches follow at residues 1–153 (MESG…ERAK) and 186–210 (EQRLKAEQRRAALEERQRQKLEKNK). The span at 24–41 (EPRPSPEGDPSPPPPPTP) shows a compositional bias: pro residues. A phosphothreonine mark is found at Thr49 and Thr53. Ser95 carries the post-translational modification Phosphoserine. Thr99 is subject to Phosphothreonine. The span at 113–123 (RSSQPSPTTVP) shows a compositional bias: low complexity. Phosphoserine is present on residues Ser115 and Ser118. Thr120 bears the Phosphothreonine mark. 2 positions are modified to phosphoserine: Ser125 and Ser127. Residues 130 to 224 (AKQDVKKAGE…AAIQRSVKKT (95 aa)) are a coiled coil. The segment covering 132 to 153 (QDVKKAGERHKLAKERREERAK) has biased composition (basic and acidic residues). 5 positions are modified to phosphoserine: Ser256, Ser275, Ser315, Ser368, and Ser401. A disordered region spans residues 318 to 816 (TLPRNGRDQG…KGTAGDKSLG (499 aa)). The span at 407–437 (RRLEATPVQKKEKKDKERENEKEKSALARER) shows a compositional bias: basic and acidic residues. A coiled-coil region spans residues 414–443 (VQKKEKKDKERENEKEKSALARERNLKKRQ). Ser444, Ser448, Ser454, and Ser460 each carry phosphoserine. A compositionally biased stretch (low complexity) spans 460–471 (SPKSKARPSSPS). Lys462 is covalently cross-linked (Glycyl lysine isopeptide (Lys-Gly) (interchain with G-Cter in SUMO2)). Phosphoserine occurs at positions 479 and 496. Pro residues predominate over residues 479–497 (SPCPSPGPGHALPPKPPSP). Residues 523-539 (PEDKNHRKSRAAEEKEP) are compositionally biased toward basic and acidic residues. Pro residues predominate over residues 542–556 (PASPAPSPVPSPTPA). Ser544, Ser548, and Ser552 each carry phosphoserine. Thr554 bears the Phosphothreonine mark. A compositionally biased stretch (low complexity) spans 568-579 (PAETAVPAVPAA). Positions 599-740 (TTDREEATRL…AETKKQDAKE (142 aa)) form a coiled coil. A compositionally biased stretch (basic and acidic residues) spans 600-740 (TDREEATRLL…AETKKQDAKE (141 aa)). Position 818 is a phosphothreonine (Thr818).

Belongs to the MAP7 family.

Its subcellular location is the cytoplasm. The protein resides in the cytoskeleton. It localises to the spindle. The protein localises to the microtubule organizing center. It is found in the centrosome. Its subcellular location is the midbody. Functionally, microtubule-stabilizing protein involved in the control of cell motility and neurite outgrowth. Facilitate microtubule stabilization through the maintenance of acetylated stable microtubules. In Mus musculus (Mouse), this protein is MAP7 domain-containing protein 1 (Map7d1).